Consider the following 347-residue polypeptide: Merozoite surface protein P12 (347 aa).

An N-terminal signal peptide occupies residues 1-25; sequence MIKLSKKYCLGISFVLYILLSVCEG. 6-Cys domains lie at 27–172 and 175–305; these read KNLT…IPSL and KVKG…ISSS. Asn-28 carries an N-linked (GlcNAc...) asparagine glycan. Cystine bridges form between Cys-31/Cys-53, Cys-67/Cys-138, and Cys-81/Cys-136. N-linked (GlcNAc...) asparagine glycans are attached at residues Asn-147, Asn-200, Asn-228, Asn-242, Asn-265, and Asn-322. 3 disulfides stabilise this stretch: Cys-179/Cys-211, Cys-225/Cys-286, and Cys-236/Cys-284. Residue Asn-322 is the site of GPI-anchor amidated asparagine attachment. Residues 323-347 constitute a propeptide, removed in mature form; it reads SSFLTLSSYCAFITFIITSFLSFIL.

Heterodimer; heterodimerizes with PF41. May form an antiparallel heterodimer with PF41. Processed into a soluble form.

It is found in the cell surface. It localises to the cell membrane. The protein is Merozoite surface protein P12 (PF12) of Plasmodium falciparum (isolate 3D7).